The chain runs to 382 residues: Secreted RxLR effector protein 118 (382 aa).

An N-terminal signal peptide occupies residues 1–21 (MRGAYYVTIALLVVASSQISA). The RxLR-dEER signature appears at 48-65 (RSLRGSRDVSNDVAIEER). The tract at residues 308-382 (MNKASTSKGK…AVTSLSSISN (75 aa)) is disordered. Over residues 310–323 (KASTSKGKSSVFTR) the composition is skewed to polar residues.

It belongs to the RxLR effector family.

Its subcellular location is the secreted. It is found in the host nucleus. In terms of biological role, secreted effector that completely suppresses the host cell death induced by cell death-inducing proteins. This Plasmopara viticola (Downy mildew of grapevine) protein is Secreted RxLR effector protein 118.